An 80-amino-acid chain; its full sequence is Iota-conotoxin-like r11c (80 aa).

The first 19 residues, 1–19 (MKLCLTFLLVLMILASVTG), serve as a signal peptide directing secretion. The propeptide occupies 20–35 (EKSSKHTLSRAARVKN). 4-hydroxyproline; partial occurs at positions 38 and 47. 4 cysteine pairs are disulfide-bonded: Cys-41–Cys-55, Cys-48–Cys-58, Cys-54–Cys-63, and Cys-57–Cys-72. At Pro-65 the chain carries 4-hydroxyproline. Leu-78 bears the D-leucine mark. Residue Arg-80 is a propeptide, removed by a carboxypeptidase.

The natural D-Leu form of the peptide is more potent than the synthetic L-Leu form. As to expression, expressed by the venom duct.

The protein localises to the secreted. Its function is as follows. Iota-conotoxins bind to voltage-gated sodium channels (Nav) and act as agonists by shifting the voltage-dependence of activation to more hyperpolarized levels. Causes circular motion, convulsions, copious urination, rigid paralysis and death upon intracranial injection into mice. Causes unbalanced swimming, swimming in diagonal and vertical motion and death, when injected intraperitoneally into goldfish. L-Leu and D-Leu forms are active on both nerve and muscle. This is Iota-conotoxin-like r11c from Conus radiatus (Rayed cone).